A 3016-amino-acid chain; its full sequence is Genome polyprotein (3016 aa).

Serine 2 bears the N-acetylserine; by host mark. The tract at residues 2–23 is interaction with STAT1; the sequence is STLPKPQRKTKRNTNRRPMDVK. The segment at 2–58 is interaction with EIF2AK2/PKR; that stretch reads STLPKPQRKTKRNTNRRPMDVKFPGGGQIVGGVYLLPRRGPRLGVRATRKTSERSQP. Residues 2–59 are interaction with DDX3X; sequence STLPKPQRKTKRNTNRRPMDVKFPGGGQIVGGVYLLPRRGPRLGVRATRKTSERSQPR. Residues 2–75 are disordered; it reads STLPKPQRKT…PKARQSQGRH (74 aa). The Cytoplasmic segment spans residues 2 to 168; sequence STLPKPQRKT…EDGINYATGN (167 aa). Short sequence motifs (nuclear localization signal) lie at residues 5–13 and 38–43; these read PKPQRKTKR and PRRGPR. A compositionally biased stretch (basic residues) spans 7-16; that stretch reads PQRKTKRNTN. Low complexity predominate over residues 32-47; sequence GGVYLLPRRGPRLGVR. At serine 53 the chain carries Phosphoserine; by host. Short sequence motifs (nuclear localization signal) lie at residues 58 to 64 and 66 to 71; these read PRGRRQP and PKARQS. A phosphoserine; by host mark is found at serine 99 and serine 116. The important for endoplasmic reticulum and mitochondrial localization stretch occupies residues 112-152; sequence PRRRSRNLGKVIDTLTCGFADLMGYIPVVGAPLGGVAAALA. The interval 122–173 is interaction with APOA2; sequence VIDTLTCGFADLMGYIPVVGAPLGGVAAALAHGVRAIEDGINYATGNLPGCS. Positions 164-167 are important for lipid droplets localization; that stretch reads YATG. A helical transmembrane segment spans residues 169–189; it reads LPGCSFSIFLLALLSCLTTPA. The propeptide at 178 to 191 is ER anchor for the core protein, removed in mature form by host signal peptidase; it reads LLALLSCLTTPASA. Over 190–358 the chain is Lumenal; sequence SAVHYRNISG…LEGHWGVIGA (169 aa). N-linked (GlcNAc...) asparagine; by host glycosylation is found at asparagine 196, asparagine 209, asparagine 234, and asparagine 250. The segment at 265 to 296 is important for fusion; it reads LVGSAAACSALYIGDLCGGVFLVGQLFTFRPR. An N-linked (GlcNAc...) asparagine; by host glycan is attached at asparagine 305. Residues 359–379 traverse the membrane as a helical segment; that stretch reads LLYYSMVANWAKVFAVLLLFA. Over 380–727 the chain is Lumenal; that stretch reads GVDATTHIGS…WEYIVLAFLV (348 aa). Residues 385 to 411 form an HVR1 region; sequence THIGSSASATTNRLTSFFSPGSKQNVQ. N-linked (GlcNAc...) (high mannose) asparagine; by host glycans are attached at residues asparagine 416, asparagine 422, and asparagine 429. 4 disulfides stabilise this stretch: cysteine 428–cysteine 552, cysteine 451–cysteine 458, cysteine 486–cysteine 494, and cysteine 503–cysteine 508. N-linked (GlcNAc...) asparagine; by host glycosylation occurs at asparagine 447. Positions 474 to 478 are HVR2; sequence ANISG. N-linked (GlcNAc...) asparagine; by host glycosylation occurs at asparagine 475. Positions 480 to 493 are CD81-binding 1; sequence SNDKPYCWHYPPRP. Asparagine 532 carries an N-linked (GlcNAc...) asparagine; by host glycan. A CD81-binding 2 region spans residues 544-551; it reads PPRGSWFG. A glycan (N-linked (GlcNAc...) asparagine; by host) is linked at asparagine 556. Cystine bridges form between cysteine 564–cysteine 569, cysteine 583–cysteine 587, cysteine 599–cysteine 622, and cysteine 609–cysteine 646. N-linked (GlcNAc...) (high mannose) asparagine; by host glycosylation is found at asparagine 625 and asparagine 647. Cysteine 654 and cysteine 679 are disulfide-bonded. The tract at residues 662–673 is PKR/eIF2-alpha phosphorylation homology domain (PePHD); the sequence is VEMSPLLFSTTQ. A helical transmembrane segment spans residues 728-748; sequence LAVARVCACLWLMFLVGQAEA. Residues 749–759 lie on the Lumenal side of the membrane; sequence ALENLIVLNAT. A helical membrane pass occupies residues 760 to 780; sequence SAAGSQGWVWGVVFICAAWYI. The Cytoplasmic portion of the chain corresponds to 781–784; the sequence is RGRA. Residues 785–805 form a helical membrane-spanning segment; it reads APITTYAILQLWPLLLLVLAL. The Lumenal portion of the chain corresponds to 806-815; that stretch reads PRRAYAYNGE. A helical transmembrane segment spans residues 816-836; sequence EAASLGMLAIVIITIFTLTPA. Topologically, residues 837–883 are cytoplasmic; sequence YKTLLISTLWWIQYYIARAEAMLYVWVPSLQVRGGRDAVILLTCLLH. A helical membrane pass occupies residues 884-904; it reads PQLGFEVTKAILALLGPLYIL. Residues 905-930 are Lumenal-facing; sequence QYSLLKTPYFVRAHILLRVCMFLRGV. Residues 905–1028 form the Peptidase C18 domain; that stretch reads QYSLLKTPYF…DIRDGGWRLL (124 aa). The protease NS2-3 stretch occupies residues 906-1208; it reads YSLLKTPYFV…PVENMQSTAR (303 aa). Cysteine 924 is lipidated: S-palmitoyl cysteine; by host. A helical transmembrane segment spans residues 931 to 951; it reads AGGKYVQAALLRLGAWTGTYI. The segment at 931 to 951 is interaction with host SCPS1; it reads AGGKYVQAALLRLGAWTGTYI. The Cytoplasmic portion of the chain corresponds to 952–1659; that stretch reads YDHLTPLSDW…CMSADLEVIT (708 aa). Active-site for protease NS2 activity; shared with dimeric partner residues include histidine 954, glutamate 974, and cysteine 995. The region spanning 1029-1210 is the Peptidase S29 domain; the sequence is APITAYAQQT…ENMQSTARSP (182 aa). Residues histidine 1085 and aspartate 1109 each act as charge relay system; for serine protease NS3 activity in the active site. 2 residues coordinate Zn(2+): cysteine 1125 and cysteine 1127. Serine 1167 functions as the Charge relay system; for serine protease NS3 activity in the catalytic mechanism. Residues cysteine 1173 and histidine 1177 each contribute to the Zn(2+) site. The region spanning 1219–1371 is the Helicase ATP-binding domain; it reads PAVPQTYQVG…PNITEVALSS (153 aa). 1232–1239 provides a ligand contact to ATP; it reads APTGSGKS. Serine 1239 and glutamate 1319 together coordinate Mg(2+). Residues 1318-1321 carry the DECH box motif; the sequence is DECH. The interval 1488–1500 is RNA-binding; the sequence is QRRGRTGRGKHGV. A helical transmembrane segment spans residues 1660–1680; sequence STWVLVGGVLAALAAYCLSVG. Residues 1681–1692 form an NS3-binding region; the sequence is CVVVCGRISTTG. Over 1681–1807 the chain is Cytoplasmic; the sequence is CVVVCGRIST…SLTSPLSTST (127 aa). A helical membrane pass occupies residues 1808-1828; sequence TLLLNILGGWVASQLANPTAS. Over 1829-1830 the chain is Lumenal; sequence TA. A helical transmembrane segment spans residues 1831–1851; sequence FVVSGLAGATVGSIGLGRVLV. Position 1852 (aspartate 1852) is a topological domain, cytoplasmic. Residues 1853–1873 traverse the membrane as a helical segment; the sequence is IIAGYGAGVSGALVAFKIMSG. Residues 1874 to 1883 lie on the Lumenal side of the membrane; the sequence is ETPSAEDMVN. A helical transmembrane segment spans residues 1884–1904; sequence LLPALLSPGALVVGVVCAAIL. At 1905–1974 the chain is on the cytoplasmic side; the sequence is RRHAGPAEGA…WINSDWSTPC (70 aa). Cysteine 1974 carries the S-palmitoyl cysteine; by host lipid modification. Residues 1975–2004 lie within the membrane without spanning it; sequence SGSWLRDIWDWVCTVLSDFKVWLKSKLVPA. Residues 2005 to 2995 are Cytoplasmic-facing; that stretch reads LPGVPFLSCQ…YHSVSRARPR (991 aa). Zn(2+)-binding residues include cysteine 2013, cysteine 2031, cysteine 2033, and cysteine 2054. An FKBP8-binding region spans residues 2122–2210; it reads EFFTEVDGVR…ASSLASQLSA (89 aa). A transcriptional activation region spans residues 2122–2335; that stretch reads EFFTEVDGVR…PVPPPRRKSV (214 aa). The segment at 2137–2141 is interaction with non-structural protein 4A; that stretch reads PACKP. The segment at 2191 to 2443 is interaction with host SKP2; the sequence is RLARGSPPSC…ALVTPCAAEE (253 aa). Serine 2196, serine 2199, serine 2203, serine 2206, serine 2209, and serine 2212 each carry phosphoserine; by host. The segment at 2212–2251 is ISDR; the sequence is SLKATCTTHCAHPDADLIEANLLWRQEVGGNITRVESENK. Residues 2212–2277 form an interaction with EIF2AK2/PKR region; that stretch reads SLKATCTTHC…REPSVPAECH (66 aa). Positions 2251-2309 are NS4B-binding; sequence KVIVLDSFDPLVPEYDDREPSVPAECHRPNRPKFPPALPIWARPDYNPPLLETWKKPDY. The segment at 2302–2379 is V3; it reads ETWKKPDYAP…PTTSKSSDQA (78 aa). The SH3-binding motif lies at 2325–2328; the sequence is PPVP. The short motif at 2330-2338 is the Nuclear localization signal element; it reads PRRKSVVHL. Lysine 2353 is covalently cross-linked (Glycyl lysine isopeptide (Lys-Gly) (interchain with G-Cter in ubiquitin)). The disordered stretch occupies residues 2353-2414; it reads KSFPTQPAST…PDLSSGSWST (62 aa). Polar residues predominate over residues 2355–2376; the sequence is FPTQPASTPDSDSGHPTTSKSS. Residue serine 2454 is modified to Phosphoserine; by host. Residues 2639–2757 enclose the RdRp catalytic domain; that stretch reads PMGFSYDTRC…IAESAGVQED (119 aa). Mg(2+)-binding residues include aspartate 2645, aspartate 2743, and aspartate 2744. The helical transmembrane segment at 2996–3016 threads the bilayer; sequence IFLLCLLLLSVGVGIFLLPAR.

Belongs to the hepacivirus polyprotein family. As to quaternary structure, homooligomer. Interacts with E1 (via C-terminus). Interacts with the non-structural protein 5A. Interacts (via N-terminus) with host STAT1 (via SH2 domain); this interaction results in decreased STAT1 phosphorylation and ubiquitin-mediated proteasome-dependent STAT1 degradation, leading to decreased IFN-stimulated gene transcription. Interacts with host STAT3; this interaction constitutively activates STAT3. Interacts with host LTBR receptor. Interacts with host TNFRSF1A receptor and possibly induces apoptosis. Interacts with host HNRPK. Interacts with host YWHAE. Interacts with host UBE3A/E6AP. Interacts with host DDX3X. Interacts with host APOA2. Interacts with host RXRA protein. Interacts with host SP110 isoform 3/Sp110b; this interaction sequesters the transcriptional corepressor SP110 away from the nucleus. Interacts with host CREB3 nuclear transcription protein; this interaction triggers cell transformation. Interacts with host ACY3. Interacts with host C1QR1. Interacts with host RBM24; this interaction, which enhances the interaction of the mature core protein with 5'-UTR, may inhibit viral translation and favor replication. Interacts with host EIF2AK2/PKR; this interaction induces the autophosphorylation of EIF2AK2. Part of the viral assembly initiation complex composed of NS2, E1, E2, NS3, NS4A, NS5A and the mature core protein. Forms a heterodimer with envelope glycoprotein E2. Interacts with mature core protein. Interacts with protease NS2. The heterodimer E1/E2 interacts with host CLDN1; this interaction plays a role in viral entry into host cell. Interacts with host SPSB2 (via C-terminus). Part of the viral assembly initiation complex composed of NS2, E1, E2, NS3, NS4A, NS5A and the mature core protein. Interacts with host NEURL3; this interaction prevents E1 binding to glycoprotein E2. In terms of assembly, forms a heterodimer with envelope glycoprotein E1. Interacts with host CD81 and SCARB1 receptors; these interactions play a role in viral entry into host cell. Interacts with host EIF2AK2/PKR; this interaction inhibits EIF2AK2 and probably allows the virus to evade the innate immune response. Interacts with host CD209/DC-SIGN and CLEC4M/DC-SIGNR. Interact with host SPCS1; this interaction is essential for viral particle assembly. Interacts with protease NS2. The heterodimer E1/E2 interacts with host CLDN1; this interaction plays a role in viral entry into host cell. Part of the viral assembly initiation complex composed of NS2, E1, E2, NS3, NS4A, NS5A and the mature core protein. Interacts with host SLC3A2/4F2hc; the interaction may facilitate viral entry into host cell. Interacts with human PLSCR1. As to quaternary structure, homohexamer. Homoheptamer. Interacts with protease NS2. Homodimer. Interacts with host SPCS1; this interaction is essential for viral particle assembly. Interacts with envelope glycoprotein E1. Interacts with envelope glycoprotein E2. Interacts with viroporin p7. Interacts with serine protease/helicase NS3. Part of the replication complex composed of NS2, NS3, NS4A, NS4B, NS5A and the RNA-directed RNA polymerase embedded in an ER-derived membranous web. Part of the viral assembly initiation complex composed of NS2, E1, E2, NS3, NS4A, NS5A and the mature core protein. In terms of assembly, interacts with protease NS2. Interacts with non-structural protein 4A; this interaction stabilizes the folding of NS3 serine protease. NS3-NS4A interaction is essential for NS3 activation and allows membrane anchorage of the latter. NS3/NS4A complex also prevents phosphorylation of host IRF3, thus preventing the establishment of dsRNA induced antiviral state. Interacts with host MAVS; this interaction leads to the cleavage and inhibition of host MAVS. Interacts with host TICAM1; this interaction leads to the cleavage and inhibition of host TICAM1. Interacts with host TANK-binding kinase/TBK1; this interaction results in the inhibition of the association between TBK1 and IRF3, which leads to the inhibition of IRF3 activation. Interacts with host RBM24. Part of the replication complex composed of NS2, NS3, NS4A, NS4B, NS5A and the RNA-directed RNA polymerase embedded in an ER-derived membranous web. Part of the viral assembly initiation complex composed of NS2, E1, E2, NS3, NS4A, NS5A and the mature core protein. As to quaternary structure, interacts with NS3 serine protease; this interaction stabilizes the folding of NS3 serine protease. NS3-NS4A interaction is essential for NS3 activation and allows membrane anchorage of the latter. Interacts with non-structural protein 5A (via N-terminus). Part of the replication complex composed of NS2, NS3, NS4A, NS4B, NS5A and the RNA-directed RNA polymerase embedded in an ER-derived membranous web. Part of the viral assembly initiation complex composed of NS2, E1, E2, NS3, NS4A, NS5A and the mature core protein. Homomultimer. Interacts with non-structural protein NS5A. Interacts with host PLA2G4C; this interaction likely initiates the recruitment of replication complexes to lipid droplets. Interacts with host STING; this interaction disrupts the interaction between STING and TBK1 thereby suppressing the interferon signaling. Part of the replication complex composed of NS2, NS3, NS4A, NS4B, NS5A and the RNA-directed RNA polymerase embedded in an ER-derived membranous web. In terms of assembly, monomer. Homodimer; dimerization is required for RNA-binding. Interacts with the mature core protein. Interacts (via N-terminus) with non-structural protein 4A. Interacts with non-structural protein 4B. Interacts (via region D2) with RNA-directed RNA polymerase. Part of the viral assembly initiation complex composed of NS2, E1, E2, NS3, NS4A, NS5A and the mature core protein. Part of the replication complex composed of NS2, NS3, NS4A, NS4B, NS5A and the RNA-directed RNA polymerase embedded in an ER-derived membranous web. Interacts with host GRB2. Interacts with host BIN1. Interacts with host PIK3R1. Interacts with host SRCAP. Interacts with host FKBP8. Interacts (via C-terminus) with host VAPB (via MSP domain). Interacts with host EIF2AK2/PKR; this interaction leads to disruption of EIF2AK2 dimerization by NS5A and probably allows the virus to evade the innate immune response. Interacts (via N-terminus) with host PACSIN2 (via N-terminus); this interaction attenuates protein kinase C alpha-mediated phosphorylation of PACSIN2 by disrupting the interaction between PACSIN2 and PRKCA. Interacts (via N-terminus) with host SRC kinase (via SH2 domain). Interacts with most Src-family kinases. Interacts with host IFI27 and SKP2; promotes the ubiquitin-mediated proteasomal degradation of NS5A. Interacts with host GPS2. Interacts with host TNFRSF21; this interaction allows the modulation by the virus of JNK, p38 MAPK, STAT3, and Akt signaling pathways in a DR6-dependent manner. Interacts (via N-terminus) with host CIDEB (via N-terminus); this interaction seems to regulate the association of HCV particles with APOE. Interacts with host CHKA/Choline Kinase-alpha; CHKA bridges host PI4KA and NS5A and potentiates NS5A-stimulated PI4KA activity, which then facilitates the targeting of the ternary complex to the ER for viral replication. Interacts with host SPSB2 (via C-terminus); this interaction targets NS5A for ubiquitination and degradation. Interacts with host RAB18; this interaction may promote the association of NS5A and other replicase components with lipid droplets. Interacts (via region D2) with host PPIA/CYPA; the interaction stimulates RNA-binding ability of NS5A and is dependent on the peptidyl-prolyl cis-trans isomerase activity of PPIA/CYPA. Interacts with host TRIM14; this interaction induces the degradation of NS5A. As to quaternary structure, homooligomer. Interacts with non-structural protein 5A. Interacts with host VAPB. Interacts with host PRK2/PKN2. Interacts with host HNRNPA1 and SEPT6; these interactions facilitate viral replication. Part of the replication complex composed of NS2, NS3, NS4A, NS4B, NS5A and the RNA-directed RNA polymerase. Requires Zn(2+) as cofactor. Mg(2+) is required as a cofactor. In terms of processing, specific enzymatic cleavages in vivo yield mature proteins. The structural proteins, core, E1, E2 and p7 are produced by proteolytic processing by host signal peptidases. The core protein precursor is synthesized as a 23 kDa, which is retained in the ER membrane through the hydrophobic signal peptide. Cleavage by the signal peptidase releases the 21 kDa mature core protein. The cleavage of the core protein precursor occurs between aminoacids 176 and 188 but the exact cleavage site is not known. Some degraded forms of the core protein appear as well during the course of infection. The other proteins (p7, NS2, NS3, NS4A, NS4B, NS5A and NS5B) are cleaved by the viral proteases. Autoprocessing between NS2 and NS3 is mediated by the NS2 cysteine protease catalytic domain and regulated by the NS3 N-terminal domain. Post-translationally, phosphorylated by host PKC and PKA. Ubiquitinated; mediated by UBE3A and leading to core protein subsequent proteasomal degradation. In terms of processing, highly N-glycosylated. Post-translationally, palmitoylation is required for NS2/3 autoprocessing and E2 recruitment to membranes. Palmitoylated. This modification may play a role in its polymerization or in protein-protein interactions. In terms of processing, phosphorylated on serines in a basal form termed p56. p58 is a hyperphosphorylated form of p56. p56 and p58 coexist in the cell in roughly equivalent amounts. Hyperphosphorylation is dependent on the presence of NS4A. Host CSNK1A1/CKI-alpha or RPS6KB1 kinases may be responsible for NS5A phosphorylation. Post-translationally, tyrosine phosphorylation is essential for the interaction with host SRC. Ubiquitinated. Ubiquitination, most probably at Lys-2353, mediated by host IFI27 and SKP2 leads to proteasomal degradation, restricting viral infection. Ubiquitination by host TRIM22 leads to interruption of viral replication. In terms of processing, the N-terminus is phosphorylated by host PRK2/PKN2.

The protein localises to the host endoplasmic reticulum membrane. It localises to the host mitochondrion membrane. The protein resides in the virion. Its subcellular location is the host cytoplasm. It is found in the host nucleus. The protein localises to the host lipid droplet. It localises to the virion membrane. The protein resides in the host mitochondrion. Its subcellular location is the host cell membrane. It is found in the host perinuclear region. The enzyme catalyses Hydrolysis of four peptide bonds in the viral precursor polyprotein, commonly with Asp or Glu in the P6 position, Cys or Thr in P1 and Ser or Ala in P1'.. The catalysed reaction is a ribonucleoside 5'-triphosphate + H2O = a ribonucleoside 5'-diphosphate + phosphate + H(+). It catalyses the reaction ATP + H2O = ADP + phosphate + H(+). It carries out the reaction RNA(n) + a ribonucleoside 5'-triphosphate = RNA(n+1) + diphosphate. With respect to regulation, inhibited by the antiviral drug hexamethylene amiloride. Inhibition by amantadine appears to be genotype-dependent. Also inhibited by long-alkyl-chain iminosugar derivatives. Activity is up-regulated by PRK2/PKN2-mediated phosphorylation. Its function is as follows. Packages viral RNA to form a viral nucleocapsid, and promotes virion budding. Participates in the viral particle production as a result of its interaction with the non-structural protein 5A. Binds RNA and may function as a RNA chaperone to induce the RNA structural rearrangements taking place during virus replication. Modulates viral translation initiation by interacting with viral IRES and 40S ribosomal subunit. Affects various cell signaling pathways, host immunity and lipid metabolism. Prevents the establishment of cellular antiviral state by blocking the interferon-alpha/beta (IFN-alpha/beta) and IFN-gamma signaling pathways and by blocking the formation of phosphorylated STAT1 and promoting ubiquitin-mediated proteasome-dependent degradation of STAT1. Activates STAT3 leading to cellular transformation. Regulates the activity of cellular genes, including c-myc and c-fos. May repress the promoter of p53, and sequester CREB3 and SP110 isoform 3/Sp110b in the cytoplasm. Represses cell cycle negative regulating factor CDKN1A, thereby interrupting an important check point of normal cell cycle regulation. Targets transcription factors involved in the regulation of inflammatory responses and in the immune response: suppresses TNF-induced NF-kappa-B activation, and activates AP-1. Binds to dendritic cells (DCs) via C1QR1, resulting in down-regulation of T-lymphocytes proliferation. Alters lipid metabolism by interacting with hepatocellular proteins involved in lipid accumulation and storage. Induces up-regulation of FAS promoter activity, and thereby contributes to the increased triglyceride accumulation in hepatocytes (steatosis). In terms of biological role, forms a heterodimer with envelope glycoprotein E2, which mediates virus attachment to the host cell, virion internalization through clathrin-dependent endocytosis and fusion with host membrane. Fusion with the host cell is most likely mediated by both E1 and E2, through conformational rearrangements of the heterodimer required for fusion rather than a classical class II fusion mechanism. E1/E2 heterodimer binds host apolipoproteins such as APOB and ApoE thereby forming a lipo-viro-particle (LVP). APOE associated to the LVP allows the initial virus attachment to cell surface receptors such as the heparan sulfate proteoglycans (HSPGs), syndecan-1 (SDC1), syndecan-1 (SDC2), the low-density lipoprotein receptor (LDLR) and scavenger receptor class B type I (SCARB1). The cholesterol transfer activity of SCARB1 allows E2 exposure and binding of E2 to SCARB1 and the tetraspanin CD81. E1/E2 heterodimer binding on CD81 activates the epithelial growth factor receptor (EGFR) signaling pathway. Diffusion of the complex E1-E2-EGFR-SCARB1-CD81 to the cell lateral membrane allows further interaction with Claudin 1 (CLDN1) and occludin (OCLN) to finally trigger HCV entry. Functionally, forms a heterodimer with envelope glycoprotein E1, which mediates virus attachment to the host cell, virion internalization through clathrin-dependent endocytosis and fusion with host membrane. Fusion with the host cell is most likely mediated by both E1 and E2, through conformational rearrangements of the heterodimer required for fusion rather than a classical class II fusion mechanism. The interaction between envelope glycoprotein E2 and host apolipoprotein E/APOE allows the proper assembly, maturation and infectivity of the viral particles. This interaction is probably promoted via the up-regulation of cellular autophagy by the virus. E1/E2 heterodimer binds host apolipoproteins such as APOB and APOE thereby forming a lipo-viro-particle (LVP). APOE associated to the LVP allows the initial virus attachment to cell surface receptors such as the heparan sulfate proteoglycans (HSPGs), syndecan-1 (SDC1), syndecan-1 (SDC2), the low-density lipoprotein receptor (LDLR) and scavenger receptor class B type I (SCARB1). The cholesterol transfer activity of SCARB1 allows E2 exposure and binding of E2 to SCARB1 and the tetraspanin CD81. E1/E2 heterodimer binding on CD81 activates the epithelial growth factor receptor (EGFR) signaling pathway. Diffusion of the complex E1-E2-EGFR-SCARB1-CD81 to the cell lateral membrane allows further interaction with Claudin 1 (CLDN1) and occludin (OCLN) to finally trigger HCV entry. Inhibits host EIF2AK2/PKR activation, preventing the establishment of an antiviral state. Viral ligand for CD209/DC-SIGN and CLEC4M/DC-SIGNR, which are respectively found on dendritic cells (DCs), and on liver sinusoidal endothelial cells and macrophage-like cells of lymph node sinuses. These interactions allow the capture of circulating HCV particles by these cells and subsequent facilitated transmission to permissive cells such as hepatocytes and lymphocyte subpopulations. The interaction between E2 and host amino acid transporter complex formed by SLC3A2 and SLC7A5/LAT1 may facilitate viral entry into host cell. Ion channel protein that acts as a viroporin and plays an essential role in the assembly, envelopment and secretion of viral particles. Regulates the host cell secretory pathway, which induces the intracellular retention of viral glycoproteins and favors assembly of viral particles. Creates a pore in acidic organelles and releases Ca(2+) and H(+) in the cytoplasm of infected cells, leading to a productive viral infection. High levels of cytoplasmic Ca(2+) may trigger membrane trafficking and transport of viral ER-associated proteins to viroplasms, sites of viral genome replication. This ionic imbalance induces the assembly of the inflammasome complex, which triggers the maturation of pro-IL-1beta into IL-1beta through the action of caspase-1. Targets also host mitochondria and induces mitochondrial depolarization. In addition of its role as a viroporin, acts as a lipid raft adhesion factor. Its function is as follows. Cysteine protease required for the proteolytic auto-cleavage between the non-structural proteins NS2 and NS3. The N-terminus of NS3 is required for the function of NS2 protease (active region NS2-3). Promotes the initiation of viral particle assembly by mediating the interaction between structural and non-structural proteins. In terms of biological role, displays three enzymatic activities: serine protease with a chymotrypsin-like fold, NTPase and RNA helicase. NS3 serine protease, in association with NS4A, is responsible for the cleavages of NS3-NS4A, NS4A-NS4B, NS4B-NS5A and NS5A-NS5B. The NS3/NS4A complex prevents phosphorylation of host IRF3, thus preventing the establishment of dsRNA induced antiviral state. The NS3/NS4A complex induces host amino acid transporter component SLC3A2, thus contributing to HCV propagation. NS3 RNA helicase binds to RNA and unwinds both dsDNA and dsRNA in the 3' to 5' direction, and likely resolves RNA complicated stable secondary structures in the template strand. Binds a single ATP and catalyzes the unzipping of a single base pair of dsRNA. Inhibits host antiviral proteins TBK1 and IRF3 thereby preventing the establishment of an antiviral state. Cleaves host MAVS/CARDIF thereby preventing the establishment of an antiviral state. Cleaves host TICAM1/TRIF, thereby disrupting TLR3 signaling and preventing the establishment of an antiviral state. Functionally, peptide cofactor which forms a non-covalent complex with the N-terminal of NS3 serine protease. The NS3/NS4A complex prevents phosphorylation of host IRF3, thus preventing the establishment of dsRNA induced antiviral state. The NS3/NS4A complex induces host amino acid transporter component SLC3A2, thus contributing to HCV propagation. Induces a specific membrane alteration that serves as a scaffold for the virus replication complex. This membrane alteration gives rise to the so-called ER-derived membranous web that contains the replication complex. NS4B self-interaction contributes to its function in membranous web formation. Promotes host TRIF protein degradation in a CASP8-dependent manner thereby inhibiting host TLR3-mediated interferon signaling. Disrupts the interaction between STING and TBK1 contributing to the inhibition of interferon signaling. Its function is as follows. Phosphorylated protein that is indispensable for viral replication and assembly. Both hypo- and hyperphosphorylated states are required for the viral life cycle. The hyperphosphorylated form of NS5A is an inhibitor of viral replication. Involved in RNA-binding and especially in binding to the viral genome. Zinc is essential for RNA-binding. Participates in the viral particle production as a result of its interaction with the mature viral core protein. Its interaction with host VAPB may target the viral replication complex to vesicles. Down-regulates viral IRES translation initiation. Mediates interferon resistance, presumably by interacting with and inhibiting host EIF2AK2/PKR. Prevents BIN1-induced apoptosis. Acts as a transcriptional activator of some host genes important for viral replication when localized in the nucleus. Via the interaction with host PACSIN2, modulates lipid droplet formation in order to promote virion assembly. Modulates TNFRSF21/DR6 signaling pathway for viral propagation. In terms of biological role, RNA-dependent RNA polymerase that performs primer-template recognition and RNA synthesis during viral replication. Initiates RNA transcription/replication at a flavin adenine dinucleotide (FAD), resulting in a 5'- FAD cap on viral RNAs. In this way, recognition of viral 5' RNA by host pattern recognition receptors can be bypassed, thereby evading activation of antiviral pathways. This Hepatitis C virus genotype 6k (isolate VN405) (HCV) protein is Genome polyprotein.